Reading from the N-terminus, the 197-residue chain is Methylamine utilization protein MauD (197 aa).

The helical transmembrane segment at 3 to 23 threads the bilayer; sequence FLIASNILLWIAFLGVTVVML. Residues 48–180 form the Thioredoxin domain; sequence PDIGDMAPEF…LESLLEADKT (133 aa).

Its subcellular location is the membrane. The protein operates within one-carbon metabolism; methylamine degradation. Functionally, may be specifically involved in the processing, transport, and/or maturation of the MADH beta-subunit. The polypeptide is Methylamine utilization protein MauD (mauD) (Paracoccus versutus (Thiobacillus versutus)).